Reading from the N-terminus, the 250-residue chain is 2,3-bisphosphoglycerate-dependent phosphoglycerate mutase (250 aa).

Residues 8-15 (RHGQSAWN), 21-22 (TG), Arg60, 87-90 (ERHY), Lys98, 114-115 (RR), and 183-184 (GN) each bind substrate. Residue His9 is the Tele-phosphohistidine intermediate of the active site. Glu87 (proton donor/acceptor) is an active-site residue.

Belongs to the phosphoglycerate mutase family. BPG-dependent PGAM subfamily. Homodimer.

The catalysed reaction is (2R)-2-phosphoglycerate = (2R)-3-phosphoglycerate. It functions in the pathway carbohydrate degradation; glycolysis; pyruvate from D-glyceraldehyde 3-phosphate: step 3/5. Its function is as follows. Catalyzes the interconversion of 2-phosphoglycerate and 3-phosphoglycerate. This is 2,3-bisphosphoglycerate-dependent phosphoglycerate mutase from Nitratidesulfovibrio vulgaris (strain ATCC 29579 / DSM 644 / CCUG 34227 / NCIMB 8303 / VKM B-1760 / Hildenborough) (Desulfovibrio vulgaris).